The sequence spans 225 residues: RNA chaperone ProQ (225 aa).

The disordered stretch occupies residues 103–173 (LEEAKARVQT…APREERHTPV (71 aa)). A compositionally biased stretch (low complexity) spans 109-118 (RVQTQRAAQQ). The span at 137 to 146 (RERKPRPQQP) shows a compositional bias: basic residues. Residues 147–156 (RRKEGAEQRK) are compositionally biased toward basic and acidic residues.

It belongs to the ProQ family.

Its subcellular location is the cytoplasm. In terms of biological role, RNA chaperone with significant RNA binding, RNA strand exchange and RNA duplexing activities. May regulate ProP activity through an RNA-based, post-transcriptional mechanism. The protein is RNA chaperone ProQ of Klebsiella pneumoniae (strain 342).